Here is a 328-residue protein sequence, read N- to C-terminus: Carbonic anhydrase-related protein 11 (328 aa).

The signal sequence occupies residues 1 to 23; it reads MGGAARLSAPQALVLWAALGAAA. In terms of domain architecture, Alpha-carbonic anhydrase spans 33-303; sequence DWWSYKENLQ…LAHRALRGNR (271 aa). Asparagine 118 carries an N-linked (GlcNAc...) asparagine glycan. The disordered stretch occupies residues 300–328; that stretch reads RGNRDPRHPERRCRGPNYRLHVDGGPHGR. The segment covering 319-328 has biased composition (basic and acidic residues); it reads LHVDGGPHGR.

The protein belongs to the alpha-carbonic anhydrase family.

Its subcellular location is the secreted. Functionally, does not have a catalytic activity. In Mus musculus (Mouse), this protein is Carbonic anhydrase-related protein 11 (Ca11).